The chain runs to 462 residues: ATP synthase subunit beta (462 aa).

152–159 serves as a coordination point for ATP; the sequence is GGAGVGKT.

This sequence belongs to the ATPase alpha/beta chains family. F-type ATPases have 2 components, CF(1) - the catalytic core - and CF(0) - the membrane proton channel. CF(1) has five subunits: alpha(3), beta(3), gamma(1), delta(1), epsilon(1). CF(0) has three main subunits: a(1), b(2) and c(9-12). The alpha and beta chains form an alternating ring which encloses part of the gamma chain. CF(1) is attached to CF(0) by a central stalk formed by the gamma and epsilon chains, while a peripheral stalk is formed by the delta and b chains.

It is found in the cell inner membrane. The catalysed reaction is ATP + H2O + 4 H(+)(in) = ADP + phosphate + 5 H(+)(out). Its function is as follows. Produces ATP from ADP in the presence of a proton gradient across the membrane. The catalytic sites are hosted primarily by the beta subunits. The chain is ATP synthase subunit beta from Tolumonas auensis (strain DSM 9187 / NBRC 110442 / TA 4).